Here is a 187-residue protein sequence, read N- to C-terminus: Elongation factor P (187 aa).

The protein belongs to the elongation factor P family.

Its subcellular location is the cytoplasm. It functions in the pathway protein biosynthesis; polypeptide chain elongation. Involved in peptide bond synthesis. Stimulates efficient translation and peptide-bond synthesis on native or reconstituted 70S ribosomes in vitro. Probably functions indirectly by altering the affinity of the ribosome for aminoacyl-tRNA, thus increasing their reactivity as acceptors for peptidyl transferase. In Rhodococcus erythropolis (strain PR4 / NBRC 100887), this protein is Elongation factor P.